A 614-amino-acid chain; its full sequence is Heat shock protein SSB1 (614 aa).

The segment at 1–392 (MSTEVYDGAI…ILSGKATSAE (392 aa)) is nucleotide binding domain (NBD). Residues 16–18 (TTY), K74, 206–208 (GGT), 272–279 (ERAKRTLS), and G343 contribute to the ATP site. The tract at residues 393–403 (TADLLLLDVVP) is inter-domain linker. Residues 404 to 614 (LSLGVAMEGN…RAVTKAMSSR (211 aa)) form a substrate binding domain (SBD) region. The segment at 517–613 (TSEIENMISE…KRAVTKAMSS (97 aa)) is lid domain (SBDalpha). Residues 575–583 (IENTMSEAM) carry the Nuclear export signal motif.

This sequence belongs to the heat shock protein 70 family. As to quaternary structure, interacts with HAT1 in starvation conditions.

It is found in the nucleus. It localises to the cytoplasm. It carries out the reaction ATP + H2O = ADP + phosphate + H(+). Functionally, chaperone that interacts with the histone acetyltransferase HAT1 and mediates its translocation from the nucleus to the cytoplasm during germination and starvation conditions. Within the cytoplasm, HAT1 regulates autophagy via acetylation of the autophagy-related proteins ATG3 and ATG9. The sequence is that of Heat shock protein SSB1 from Pyricularia oryzae (strain 70-15 / ATCC MYA-4617 / FGSC 8958) (Rice blast fungus).